The sequence spans 91 residues: UPF0223 protein SAR1071 (91 aa).

Belongs to the UPF0223 family.

In Staphylococcus aureus (strain MRSA252), this protein is UPF0223 protein SAR1071.